Reading from the N-terminus, the 88-residue chain is MLDTKFDELMEFPSSFPFKIVGDASDTLADRVVAVAQSLAPDDYTPITKVSSKGTYNSVTIRITVTSKEQIEQLYTQLAAIEGVKRVL.

Belongs to the UPF0250 family.

This Shewanella halifaxensis (strain HAW-EB4) protein is UPF0250 protein Shal_3239.